Consider the following 1391-residue polypeptide: Axoneme-associated protein mst101(2) (1391 aa).

Disordered regions lie at residues glutamate 170–leucine 213 and serine 280–leucine 300. Positions threonine 184 to serine 201 are enriched in basic residues. The segment covering lysine 291–leucine 300 has biased composition (basic and acidic residues). 59 consecutive repeat copies span residues lysine 332–glutamate 347, lysine 348–glutamate 363, lysine 364–glutamate 379, lysine 380–glutamate 395, lysine 396–glutamate 411, lysine 412–glutamate 427, arginine 428–glutamate 443, lysine 444–glutamate 459, arginine 460–glutamate 475, lysine 476–glutamate 491, arginine 492–isoleucine 507, lysine 508–glutamate 523, lysine 524–glutamate 539, lysine 540–glutamate 555, lysine 556–glutamate 571, lysine 572–glutamate 587, lysine 588–glutamate 603, arginine 604–glutamate 619, lysine 620–glutamate 635, arginine 636–glutamate 651, lysine 652–glutamate 667, lysine 668–glutamate 683, lysine 684–glutamate 699, lysine 700–glutamate 715, arginine 716–glutamate 731, lysine 732–lysine 747, asparagine 748–glutamate 763, lysine 764–lysine 779, lysine 780–lysine 795, lysine 796–lysine 811, lysine 812–lysine 827, lysine 828–lysine 843, lysine 844–lysine 859, lysine 860–lysine 875, lysine 876–lysine 891, lysine 892–lysine 907, lysine 908–lysine 923, lysine 924–lysine 939, lysine 940–asparagine 955, lysine 956–leucine 971, glycine 972–alanine 987, alanine 988–arginine 1003, alanine 1004–arginine 1019, alanine 1020–arginine 1035, alanine 1036–arginine 1051, alanine 1052–arginine 1067, alanine 1068–arginine 1083, alanine 1084–arginine 1099, alanine 1100–arginine 1115, alanine 1116–alanine 1131, alanine 1132–alanine 1147, alanine 1148–alanine 1163, alanine 1164–alanine 1179, alanine 1180–leucine 1195, alanine 1196–alanine 1211, alanine 1212–alanine 1227, alanine 1228–alanine 1243, alanine 1244–alanine 1259, and alanine 1260–alanine 1275. Residues lysine 332–alanine 1275 form a 59 X 16 AA approximate tandem repeats of [KR]-K-X-C-X-X-X-A-K-X-X-K-X-X-X-E region. Positions leucine 370 to lysine 429 are disordered. The tract at residues lysine 516–lysine 577 is disordered. Over residues lysine 517–lysine 577 the composition is skewed to basic and acidic residues. Residues alanine 729–lysine 765 show a composition bias toward basic residues. 3 disordered regions span residues alanine 729–alanine 881, glutamate 900–arginine 922, and lysine 934–lysine 1013. Positions lysine 766 to alanine 881 are enriched in basic and acidic residues. Basic residues-rich tracts occupy residues lysine 934–lysine 949 and lysine 956–lysine 976. Residues arginine 977–lysine 1013 are compositionally biased toward basic and acidic residues. 2 disordered regions span residues glutamate 1076 to glutamine 1095 and lysine 1104 to alanine 1212. Positions lysine 1353–lysine 1370 are enriched in basic and acidic residues. The disordered stretch occupies residues lysine 1353–cysteine 1391. The segment covering asparagine 1371–cysteine 1391 has biased composition (basic residues).

As to expression, testis. Primary spermatocytes and early spermatids.

The protein resides in the cytoplasm. Its function is as follows. Possible structural role in the sperm tail. In Drosophila hydei (Fruit fly), this protein is Axoneme-associated protein mst101(2) (mst101(2)).